Here is a 344-residue protein sequence, read N- to C-terminus: tRNA N6-adenosine threonylcarbamoyltransferase (344 aa).

Fe cation contacts are provided by H111 and H115. Residues 134-138 (LVSGG), D167, G180, and N273 contribute to the substrate site. D301 provides a ligand contact to Fe cation.

Belongs to the KAE1 / TsaD family. The cofactor is Fe(2+).

The protein localises to the cytoplasm. The enzyme catalyses L-threonylcarbamoyladenylate + adenosine(37) in tRNA = N(6)-L-threonylcarbamoyladenosine(37) in tRNA + AMP + H(+). In terms of biological role, required for the formation of a threonylcarbamoyl group on adenosine at position 37 (t(6)A37) in tRNAs that read codons beginning with adenine. Is involved in the transfer of the threonylcarbamoyl moiety of threonylcarbamoyl-AMP (TC-AMP) to the N6 group of A37, together with TsaE and TsaB. TsaD likely plays a direct catalytic role in this reaction. The chain is tRNA N6-adenosine threonylcarbamoyltransferase from Cupriavidus necator (strain ATCC 17699 / DSM 428 / KCTC 22496 / NCIMB 10442 / H16 / Stanier 337) (Ralstonia eutropha).